The chain runs to 308 residues: UDP-N-acetylenolpyruvoylglucosamine reductase (308 aa).

Residues arginine 22–glycine 185 form the FAD-binding PCMH-type domain. Arginine 165 is an active-site residue. Residues glutamine 197–serine 211 are compositionally biased toward basic and acidic residues. The tract at residues glutamine 197–alanine 228 is disordered. Over residues alanine 212–glycine 226 the composition is skewed to polar residues. Serine 214 (proton donor) is an active-site residue. Glutamate 296 is a catalytic residue.

The protein belongs to the MurB family. It depends on FAD as a cofactor.

It localises to the cytoplasm. It catalyses the reaction UDP-N-acetyl-alpha-D-muramate + NADP(+) = UDP-N-acetyl-3-O-(1-carboxyvinyl)-alpha-D-glucosamine + NADPH + H(+). It participates in cell wall biogenesis; peptidoglycan biosynthesis. Functionally, cell wall formation. This chain is UDP-N-acetylenolpyruvoylglucosamine reductase, found in Cereibacter sphaeroides (strain ATCC 17029 / ATH 2.4.9) (Rhodobacter sphaeroides).